The sequence spans 687 residues: Homeobox-leucine zipper protein HDG12 (687 aa).

The segment at 1 to 32 (MEFLGDSQNHDSSETEKKNKKKKRFHRHTPHQ) is disordered. The span at 8–17 (QNHDSSETEK) shows a compositional bias: basic and acidic residues. Over residues 18–30 (KNKKKKRFHRHTP) the composition is skewed to basic residues. A DNA-binding region (homeobox) is located at residues 21-80 (KKKRFHRHTPHQIQRLESTFNECQHPDEKQRNQLSRELGLAPRQIKFWFQNRRTQKKAQH). A coiled-coil region spans residues 87–150 (ALKEENDKIR…LERVSSIAAK (64 aa)). The region spanning 206 to 440 (SEMDKSLMTN…LQRMCERFTN (235 aa)) is the START domain.

The protein belongs to the HD-ZIP homeobox family. Class IV subfamily. As to quaternary structure, interacts with BBM. Expressed in apical meristems and young epidermal tissue including trichomes and stipules. Expressed in lateral root tips, the L1 layer of apical inflorescence meristems and early flower primordia, carpel and stamen filament epidermis, stigma papillae, ovule primordia, nucellus and embryo.

It is found in the nucleus. In terms of biological role, probable transcription factor that acts as a negative regulator of trichome branching in association with HDG11. Seems to promote cell differentiation. May regulate cell differentiation and proliferation during root and shoot meristem development. Acts as a positive regulator of SCL18/LAS expression. Involved, together with PDF2, in the regulation of flower organs development by promoting the expression of APETALA 3 (AP3) in the epidermis and internal cell layers of developing flowers. The protein is Homeobox-leucine zipper protein HDG12 of Arabidopsis thaliana (Mouse-ear cress).